The chain runs to 373 residues: Probable dual-specificity RNA methyltransferase RlmN (373 aa).

E111 acts as the Proton acceptor in catalysis. The Radical SAM core domain maps to 117 to 356 (GPGRLTACLS…LRKSYGTSIH (240 aa)). C124 and C359 form a disulfide bridge. 3 residues coordinate [4Fe-4S] cluster: C131, C135, and C138. S-adenosyl-L-methionine is bound by residues 183-184 (GE), S216, 239-241 (SLH), and N316. C359 acts as the S-methylcysteine intermediate in catalysis.

The protein belongs to the radical SAM superfamily. RlmN family. [4Fe-4S] cluster is required as a cofactor.

Its subcellular location is the cytoplasm. It carries out the reaction adenosine(2503) in 23S rRNA + 2 reduced [2Fe-2S]-[ferredoxin] + 2 S-adenosyl-L-methionine = 2-methyladenosine(2503) in 23S rRNA + 5'-deoxyadenosine + L-methionine + 2 oxidized [2Fe-2S]-[ferredoxin] + S-adenosyl-L-homocysteine. The catalysed reaction is adenosine(37) in tRNA + 2 reduced [2Fe-2S]-[ferredoxin] + 2 S-adenosyl-L-methionine = 2-methyladenosine(37) in tRNA + 5'-deoxyadenosine + L-methionine + 2 oxidized [2Fe-2S]-[ferredoxin] + S-adenosyl-L-homocysteine. Functionally, specifically methylates position 2 of adenine 2503 in 23S rRNA and position 2 of adenine 37 in tRNAs. The polypeptide is Probable dual-specificity RNA methyltransferase RlmN (Chlorobium phaeovibrioides (strain DSM 265 / 1930) (Prosthecochloris vibrioformis (strain DSM 265))).